The primary structure comprises 1401 residues: Condensin complex subunit 1 (1401 aa).

The interval 1–603 (MAPQMYEFHL…TVCKNKPNMS (603 aa)) is interactions with SMC2 and SMC4. Phosphoserine is present on residues S20 and S585. Over residues 576–596 (STQEKNPRESTGNMVTGQTVC) the composition is skewed to polar residues. Disordered stretches follow at residues 576–611 (STQEKNPRESTGNMVTGQTVCKNKPNMSDPEESRGN), 956–978 (REEQEHKTKDPKEKNTSSETTME), and 1303–1401 (LEIG…RHRS). The span at 956 to 971 (REEQEHKTKDPKEKNT) shows a compositional bias: basic and acidic residues. Residues 1308–1336 (AGSQRAPSAKKPSTGSRYQPLASTASDND) are compositionally biased toward polar residues. Residues S1310, S1315, and S1330 each carry the phosphoserine modification. Phosphothreonine is present on T1331. Residue S1333 is modified to Phosphoserine. Residue T1339 is modified to Phosphothreonine. The Bipartite nuclear localization signal motif lies at 1342–1362 (PRRTTRRHPNTQQRASKKKPK). A compositionally biased stretch (basic residues) spans 1345 to 1362 (TTRRHPNTQQRASKKKPK). S1366, S1367, S1370, S1371, and S1376 each carry phosphoserine. Positions 1369 to 1382 (ESSEEDLSAEMTED) are enriched in acidic residues. Phosphothreonine; by CDK1 is present on residues T1384 and T1389. S1395 carries the post-translational modification Phosphoserine.

This sequence belongs to the CND1 (condensin subunit 1) family. In terms of assembly, component of the condensin complex, which contains the SMC2 and SMC4 heterodimer, and three non SMC subunits that probably regulate the complex: NCAPH/BRRN1, NCAPD2/CAPD2 and NCAPG. Interacts with histones H1 and H3. Post-translationally, phosphorylated by CDK1. Its phosphorylation, as well as that of NCAPH and NCAPG subunits, activates the condensin complex and is required for chromosome condensation.

The protein localises to the nucleus. Its subcellular location is the cytoplasm. It localises to the chromosome. Functionally, regulatory subunit of the condensin complex, a complex required for conversion of interphase chromatin into mitotic-like condense chromosomes. The condensin complex probably introduces positive supercoils into relaxed DNA in the presence of type I topoisomerases and converts nicked DNA into positive knotted forms in the presence of type II topoisomerases. May target the condensin complex to DNA via its C-terminal domain. May promote the resolution of double-strand DNA catenanes (intertwines) between sister chromatids. Condensin-mediated compaction likely increases tension in catenated sister chromatids, providing directionality for type II topoisomerase-mediated strand exchanges toward chromatid decatenation. Required for decatenation of non-centromeric ultrafine DNA bridges during anaphase. Early in neurogenesis, may play an essential role to ensure accurate mitotic chromosome condensation in neuron stem cells, ultimately affecting neuron pool and cortex size. In Homo sapiens (Human), this protein is Condensin complex subunit 1.